We begin with the raw amino-acid sequence, 161 residues long: Putative HTH-type transcriptional regulator MT1325 (161 aa).

One can recognise an HTH rrf2-type domain in the interval 2–132 (RMSAKAEYAV…EETTLADVAG (131 aa)).

The chain is Putative HTH-type transcriptional regulator MT1325 from Mycobacterium tuberculosis (strain CDC 1551 / Oshkosh).